A 131-amino-acid polypeptide reads, in one-letter code: UPF0102 protein YraN (131 aa).

The tract at residues 1 to 20 is disordered; the sequence is MATVPTRSGSPRQLTTKQTG.

This sequence belongs to the UPF0102 family.

In Escherichia coli O139:H28 (strain E24377A / ETEC), this protein is UPF0102 protein YraN.